Reading from the N-terminus, the 246-residue chain is Myelin-oligodendrocyte glycoprotein (246 aa).

Positions 1–28 (MACLWSFSWPSCFLSLLLLLLQLSCSYA) are cleaved as a signal peptide. The Extracellular portion of the chain corresponds to 29–156 (GQFRVIGPGY…FYWVNPGVLT (128 aa)). The 114-residue stretch at 31–144 (FRVIGPGYPI…EEAAMELKVE (114 aa)) folds into the Ig-like V-type domain. C52 and C126 form a disulfide bridge. N-linked (GlcNAc...) asparagine glycosylation occurs at N59. A helical membrane pass occupies residues 157–177 (LIALVPTILLQVPVGLVFLFL). Over 178–209 (QHRLRGKLRAEVENLHRTFDPHFLRVPCWKIT) the chain is Cytoplasmic. Residues 210 to 230 (LFVIVPVLGPLVALIICYNWL) form a helical membrane-spanning segment. Over 231–246 (HRRLAGQFLEELRNPF) the chain is Extracellular.

It belongs to the immunoglobulin superfamily. BTN/MOG family. Homodimer. Found exclusively in the CNS, where it is localized on the surface of myelin and oligodendrocyte cytoplasmic membranes. Reduced expression levels are observed in jimpy and quacking dysmyelinating mutant mice.

Its subcellular location is the membrane. Minor component of the myelin sheath. May be involved in completion and/or maintenance of the myelin sheath and in cell-cell communication. Mediates homophilic cell-cell adhesion. This chain is Myelin-oligodendrocyte glycoprotein (Mog), found in Mus musculus (Mouse).